The following is a 902-amino-acid chain: Glutamate receptor 4 (902 aa).

A signal peptide spans 1 to 20 (MRIISRQIVLLFSGFWGLAM). Topologically, residues 22–544 (AFPSSVQIGG…GVFSFLDPLA (523 aa)) are extracellular. N-linked (GlcNAc...) asparagine glycans are attached at residues asparagine 52, asparagine 56, asparagine 258, asparagine 371, asparagine 407, and asparagine 414. The cysteines at positions 84 and 331 are disulfide-linked. Residues proline 500, threonine 502, and arginine 507 each coordinate L-glutamate. Residues 545–565 (YEIWMCIVFAYIGVSVVLFLV) form a helical membrane-spanning segment. Residues 566–592 (SRFSPYEWHTEEPEDGKEGPSDQPPNE) lie on the Cytoplasmic side of the membrane. Residues 593–608 (FGIFNSLWFSLGAFMQ) constitute an intramembrane region (helical; Pore-forming). An intramembrane segment occupies 609–611 (QGC). Cysteine 611 carries the S-palmitoyl cysteine lipid modification. The Cytoplasmic portion of the chain corresponds to 612 to 617 (DISPRS). The chain crosses the membrane as a helical span at residues 618–638 (LSGRIVGGVWWFFTLIIISSY). Residues 639–813 (TANLAAFLTV…DKTSALSLSN (175 aa)) lie on the Extracellular side of the membrane. Residues serine 676, threonine 677, and glutamate 727 each coordinate L-glutamate. The cysteines at positions 740 and 795 are disulfide-linked. The chain crosses the membrane as a helical span at residues 814–834 (VAGVFYILVGGLGLAMLVALI). Residues 835 to 902 (EFCYKSRAEA…GLAVIASDLP (68 aa)) are Cytoplasmic-facing. Cysteine 837 carries the S-palmitoyl cysteine lipid modification. Residue serine 862 is modified to Phosphoserine; by PKC/PRKCG.

It belongs to the glutamate-gated ion channel (TC 1.A.10.1) family. GRIA4 subfamily. As to quaternary structure, homotetramer or heterotetramer of pore-forming glutamate receptor subunits. Tetramers may be formed by the dimerization of dimers. Interacts with EPB41L1 via its C-terminus. Isoform 3 interacts with PICK1. Found in a complex with GRIA1, GRIA2, GRIA3, CNIH2, CNIH3, CACNG2, CACNG3, CACNG4, CACNG5, CACNG7 and CACNG8. Interacts with CACNG5 and PRKCG. Found in a complex with GRIA1, GRIA2, GRIA3, DLG4, CACNG8 and CNIH2. Palmitoylated. Depalmitoylated upon L-glutamate stimulation. ZDHHC3/GODZ specifically palmitoylates Cys-611, which leads to Golgi retention and decreased cell surface expression. In contrast, Cys-837 palmitoylation does not affect cell surface expression but regulates stimulation-dependent endocytosis. Post-translationally, phosphorylated at Ser-862 by PRKCG; phosphorylation increases plasma membrane-associated GRI4 expression.

Its subcellular location is the cell membrane. It localises to the postsynaptic cell membrane. The protein localises to the cell projection. The protein resides in the dendrite. The enzyme catalyses Ca(2+)(in) = Ca(2+)(out). It carries out the reaction Na(+)(in) = Na(+)(out). It catalyses the reaction Mg(2+)(in) = Mg(2+)(out). Ionotropic glutamate receptor that functions as a ligand-gated cation channel, gated by L-glutamate and glutamatergic agonists such as alpha-amino-3-hydroxy-5-methyl-4-isoxazolepropionic acid (AMPA), quisqualic acid, and kainic acid. L-glutamate acts as an excitatory neurotransmitter at many synapses in the central nervous system and plays an important role in fast excitatory synaptic transmission. Binding of the excitatory neurotransmitter L-glutamate induces a conformation change, leading to the opening of the cation channel, and thereby converts the chemical signal to an electrical impulse upon entry of monovalent and divalent cations such as sodium and calcium. The receptor then desensitizes rapidly and enters a transient inactive state, characterized by the presence of bound agonist. In the presence of CACNG8, shows resensitization which is characterized by a delayed accumulation of current flux upon continued application of L-glutamate. The polypeptide is Glutamate receptor 4 (Macaca fascicularis (Crab-eating macaque)).